The following is a 114-amino-acid chain: PDZK1-interacting protein 1 (114 aa).

At 1–28 (MSALSLVILGLLMAVPPASCQQGLGNLQ) the chain is on the extracellular side. The chain crosses the membrane as a helical span at residues 29–51 (PWMQGLIAVAVFLVLVAIAFAIN). At 52-114 (HFWCQEEREP…EEGRVHSTPM (63 aa)) the chain is on the cytoplasmic side. At Ser85 the chain carries Phosphoserine. Positions 92–114 (SNEHENAYENTSEEEGRVHSTPM) are disordered. The span at 105-114 (EEGRVHSTPM) shows a compositional bias: basic and acidic residues.

It belongs to the PDZK1-interacting protein 1/SMIM24 family. Forms a heterodimer (via N-terminal transmembrane helix) with SLC5A2/SGLT2 (via TM13); this interaction enhances SLC5A2 transporter activity. Interacts with PDZK1.

Its subcellular location is the apical cell membrane. Auxiliary protein of electrogenic Na(+)-coupled sugar symporter SLC5A2/SGLT2 and SLC5A1/SGLT1. Essential for the transporter activity of SLC5A2/SGLT2 but not SLC5A1/SGLT1. The sequence is that of PDZK1-interacting protein 1 from Sus scrofa (Pig).